Consider the following 404-residue polypeptide: Coenzyme F420H(2) oxidase (404 aa).

His-83, Glu-85, Asp-87, His-88, His-151, Asp-170, and His-233 together coordinate Fe cation. Residues 259-399 (VTVIYDTMHG…ACFEAGRKLA (141 aa)) form the Flavodoxin-like domain. Residues 265-270 (TMHGST), 317-320 (TIYD), and 351-356 (SMGGNG) each bind FMN.

This sequence in the N-terminal section; belongs to the zinc metallo-hydrolase group 3 family. Homodimer. Homotetramer. The tetramer is composed of two functional dimers. It depends on FMN as a cofactor. Fe cation is required as a cofactor.

The catalysed reaction is 2 reduced coenzyme F420-(gamma-L-Glu)(n) + O2 = 2 oxidized coenzyme F420-(gamma-L-Glu)(n) + 2 H2O + 2 H(+). In terms of biological role, catalyzes the oxidation of F420H(2) with O(2). May be involved in O(2) detoxification, reducing the intracellular O(2) concentration to a level allowing growth at the expense of methane formation. This Methanothermobacter marburgensis (strain ATCC BAA-927 / DSM 2133 / JCM 14651 / NBRC 100331 / OCM 82 / Marburg) (Methanobacterium thermoautotrophicum) protein is Coenzyme F420H(2) oxidase.